Here is a 289-residue protein sequence, read N- to C-terminus: Methionyl-tRNA formyltransferase (289 aa).

Residue 106-109 participates in (6S)-5,6,7,8-tetrahydrofolate binding; it reads SLLP.

The protein belongs to the Fmt family.

The enzyme catalyses L-methionyl-tRNA(fMet) + (6R)-10-formyltetrahydrofolate = N-formyl-L-methionyl-tRNA(fMet) + (6S)-5,6,7,8-tetrahydrofolate + H(+). In terms of biological role, attaches a formyl group to the free amino group of methionyl-tRNA(fMet). The formyl group appears to play a dual role in the initiator identity of N-formylmethionyl-tRNA by promoting its recognition by IF2 and preventing the misappropriation of this tRNA by the elongation apparatus. This is Methionyl-tRNA formyltransferase from Mycoplasmopsis pulmonis (strain UAB CTIP) (Mycoplasma pulmonis).